Reading from the N-terminus, the 178-residue chain is ATP-dependent protease subunit HslV (178 aa).

The active site involves Thr-7. Na(+) contacts are provided by Gly-162, Cys-165, and Thr-168.

This sequence belongs to the peptidase T1B family. HslV subfamily. In terms of assembly, a double ring-shaped homohexamer of HslV is capped on each side by a ring-shaped HslU homohexamer. The assembly of the HslU/HslV complex is dependent on binding of ATP.

The protein localises to the cytoplasm. The catalysed reaction is ATP-dependent cleavage of peptide bonds with broad specificity.. With respect to regulation, allosterically activated by HslU binding. Functionally, protease subunit of a proteasome-like degradation complex believed to be a general protein degrading machinery. The sequence is that of ATP-dependent protease subunit HslV from Paraburkholderia xenovorans (strain LB400).